The primary structure comprises 219 residues: MHCKIAIDGPAGSGKTTVAKLIAQKLGIDYLDTGAMYRIVGLYLHSIGVEPKSTSIKDILEKVNIEYIGKDYYLNGKKVGDEIRTPEAGMFASQYAANPEVREFLTKIQKQICSNRSIVAEGRDIGTVVMPDATVKIFLVASPEVRARRRYEELKSKNMEVSYEELLRQIEERDKNDSNRDVAPLVKAPDAIEIDTSNLSIEEVVEKILDIVKERCRIK.

Gly-9–Thr-17 lines the ATP pocket.

This sequence belongs to the cytidylate kinase family. Type 1 subfamily.

Its subcellular location is the cytoplasm. It carries out the reaction CMP + ATP = CDP + ADP. It catalyses the reaction dCMP + ATP = dCDP + ADP. This is Cytidylate kinase from Fervidobacterium nodosum (strain ATCC 35602 / DSM 5306 / Rt17-B1).